The sequence spans 209 residues: uncharacterized protein (209 aa).

Residues 177-209 (DNSDNSSDSDDSDSLDGSDDLNDSDNVDNLFVG) form a disordered region. A compositionally biased stretch (acidic residues) spans 183–202 (SDSDDSDSLDGSDDLNDSDN).

This is an uncharacterized protein from Acanthamoeba polyphaga (Amoeba).